Reading from the N-terminus, the 424-residue chain is ATP-citrate synthase alpha chain protein 3 (424 aa).

Residues asparagine 343, threonine 345, and arginine 376 each contribute to the citrate site.

This sequence belongs to the succinate/malate CoA ligase beta subunit family. As to quaternary structure, heterooctamer of 4 alpha and 4 beta chains.

The protein resides in the cytoplasm. It is found in the cytosol. It carries out the reaction oxaloacetate + acetyl-CoA + ADP + phosphate = citrate + ATP + CoA. In terms of biological role, ATP citrate-lyase is the primary enzyme responsible for the synthesis of cytosolic acetyl-CoA, used for the elongation of fatty acids and biosynthesis of isoprenoids, flavonoids and malonated derivatives. May supply substrate to the cytosolic acetyl-CoA carboxylase, which generates the malonyl-CoA used for the synthesis of a multitude of compounds, including very long chain fatty acids and flavonoids. Required for normal growth and development and elongation of C18 fatty acids to C20 to C24 fatty acids in seeds. In contrast to all known animal ACL enzymes having a homomeric structure, plant ACLs are composed of alpha and beta chains. This Arabidopsis thaliana (Mouse-ear cress) protein is ATP-citrate synthase alpha chain protein 3 (ACLA-3).